A 215-amino-acid chain; its full sequence is Vesicle-trafficking protein SEC22b (215 aa).

Residues 2-194 are Cytoplasmic-facing; that stretch reads VLLTMIARVA…KYLNMRSTYA (193 aa). The region spanning 6–119 is the Longin domain; sequence MIARVADGLP…YSFIEFDTFI (114 aa). Lys38 bears the N6-acetyllysine mark. One can recognise a v-SNARE coiled-coil homology domain in the interval 134-194; the sequence is NLGSINTELQ…KYLNMRSTYA (61 aa). Residue Ser137 is modified to Phosphoserine. Thr140 is modified (phosphothreonine). Ser164, Ser168, Ser174, and Ser177 each carry phosphoserine. The helical; Anchor for type IV membrane protein transmembrane segment at 195-215 threads the bilayer; sequence KLAAVAVFFIMLIVYVRFWWL.

It belongs to the synaptobrevin family. In terms of assembly, interacts with STX17. Component of two distinct SNARE complexes consisting of STX5, GOSR2/BOS1, BET1 and SEC22B or STX18, USE1L, BNIP1/SEC20L and SEC22B. YKT6 can probably replace SEC22B in either complex. Interacts with the COPII Sec23/24 complex composed of SEC23A and SEC24A; recruits SEC22B into COPII-coated vesicles to allow its transport from the endoplasmic reticulum to the Golgi. Interacts with BET1.

The protein resides in the endoplasmic reticulum membrane. It is found in the endoplasmic reticulum-Golgi intermediate compartment membrane. Its subcellular location is the golgi apparatus. It localises to the cis-Golgi network membrane. The protein localises to the trans-Golgi network membrane. The protein resides in the melanosome. Its function is as follows. SNARE involved in targeting and fusion of ER-derived transport vesicles with the Golgi complex as well as Golgi-derived retrograde transport vesicles with the ER. This Homo sapiens (Human) protein is Vesicle-trafficking protein SEC22b (SEC22B).